The primary structure comprises 543 residues: Tubby-related protein 1 (543 aa).

The interval 1–290 is disordered; it reads MPLQEETLRE…RASSPPVEVG (290 aa). Composition is skewed to basic and acidic residues over residues 46-56 and 86-99; these read PETPDSLESKP and FLRDPEAKKRDPRE. Acidic residues-rich tracts occupy residues 110–132 and 244–255; these read GGEENSEEDSDDDDNDDDEEEEE and KKEEEEEVEEEV. Basic residues predominate over residues 267–276; it reads GRAKGKGKKK.

It belongs to the TUB family. As to quaternary structure, homodimer. May interact with ABCF1, PSIP1, ZEB1 and HMGB2 (Potential). Interacts with F-actin. Interacts with DNM1. Interacts with TUB. Interacts with TYRO3. As to expression, retina specific. Detected in the outer plexiform layer in photoreceptor cells (at protein level).

Its subcellular location is the cytoplasm. It is found in the cell membrane. The protein resides in the secreted. It localises to the synapse. Functionally, required for normal development of photoreceptor synapses. Required for normal photoreceptor function and for long-term survival of photoreceptor cells. Interacts with cytoskeleton proteins and may play a role in protein transport in photoreceptor cells. Binds lipids, especially phosphatidylinositol 3-phosphate, phosphatidylinositol 4-phosphate, phosphatidylinositol 5-phosphate, phosphatidylinositol 3,4-bisphosphate, phosphatidylinositol 4,5-bisphosphate, phosphatidylinositol 3,4,5-bisphosphate, phosphatidylserine and phosphatidic acid (in vitro). Contribute to stimulation of phagocytosis of apoptotic retinal pigment epithelium (RPE) cells and macrophages. This is Tubby-related protein 1 (Tulp1) from Mus musculus (Mouse).